The sequence spans 124 residues: Fluoride-specific ion channel FluC (124 aa).

Helical transmembrane passes span 1-21, 35-55, 68-88, and 99-119; these read MGVVFAVALGGAIGSALRFLL, VGTLFVNLVGAFFIGFFFAYL, LLITGLLGGLTTFSTYSYESF, and FLAYTLGTNVLGIFFTFLGYI. 2 residues coordinate Na(+): glycine 75 and threonine 78.

Belongs to the fluoride channel Fluc/FEX (TC 1.A.43) family.

It is found in the cell inner membrane. It catalyses the reaction fluoride(in) = fluoride(out). Its activity is regulated as follows. Na(+) is not transported, but it plays an essential structural role and its presence is essential for fluoride channel function. Functionally, fluoride-specific ion channel. Important for reducing fluoride concentration in the cell, thus reducing its toxicity. The chain is Fluoride-specific ion channel FluC from Aquifex aeolicus (strain VF5).